We begin with the raw amino-acid sequence, 541 residues long: MLRIFCFVISWCLIAFAQPDLSGFVSILGAACGYGFFWYSLEPLKKPSLPLRTLFVSCFFWIFTIEGIHFSWMLSDQYIGKLIYLVWLTLITILSVLFSGFSCLLVAIVRQKRTAFLWSLPGVWVAIEMLRFYGIFSGMSFDYLGWPMTASAYGRQFGGFLGWAGQSFAVIAVNMSFYCLLLKKPHAKMLWVLTLLLPYTFGAIHYEYLKHAFQQDKRALRVAVVQPAHPPIRPKLKSPIVVWEQLLQLVSPIQQPIDLLIFPEVVVPFGKHRQVYPYESCAHLLSSFAPLPEGKAFLSNSDCATALSQHFQCPVIIGLERWVKKENVLYWYNSAEVISHKGISVGYDKRILVPGGEYIPGGKFGSLICRQLFPKYALGCKRLPGRRSGVVQVRGLPRIGITICYEETFGYRLQSYKRQGAELLVNLTNDGWYPESRLPKVHFLHGMLRNQEFGMPCVRACQTGVTAAVDSLGRILKILPYDTRETKAPSGVLETSLPLFNYKTLYGYCGDYPMILIAFCAVSYLGGGFLGYRLLAKKEIR.

The next 6 helical transmembrane spans lie at 21 to 41, 54 to 74, 82 to 102, 116 to 136, 157 to 177, and 189 to 209; these read LSGFVSILGAACGYGFFWYSL, LFVSCFFWIFTIEGIHFSWML, LIYLVWLTLITILSVLFSGFS, FLWSLPGVWVAIEMLRFYGIF, FGGFLGWAGQSFAVIAVNMSF, and MLWVLTLLLPYTFGAIHYEYL. Residues 220–499 enclose the CN hydrolase domain; sequence LRVAVVQPAH…SGVLETSLPL (280 aa). Catalysis depends on E264, which acts as the Proton acceptor. K349 is a catalytic residue. C404 functions as the Nucleophile in the catalytic mechanism. The chain crosses the membrane as a helical span at residues 512 to 532; sequence YPMILIAFCAVSYLGGGFLGY.

This sequence belongs to the CN hydrolase family. Apolipoprotein N-acyltransferase subfamily.

Its subcellular location is the cell inner membrane. The catalysed reaction is N-terminal S-1,2-diacyl-sn-glyceryl-L-cysteinyl-[lipoprotein] + a glycerophospholipid = N-acyl-S-1,2-diacyl-sn-glyceryl-L-cysteinyl-[lipoprotein] + a 2-acyl-sn-glycero-3-phospholipid + H(+). It functions in the pathway protein modification; lipoprotein biosynthesis (N-acyl transfer). Catalyzes the phospholipid dependent N-acylation of the N-terminal cysteine of apolipoprotein, the last step in lipoprotein maturation. This chain is Apolipoprotein N-acyltransferase, found in Chlamydia pneumoniae (Chlamydophila pneumoniae).